A 257-amino-acid chain; its full sequence is 3-deoxy-manno-octulosonate cytidylyltransferase (257 aa).

Belongs to the KdsB family.

Its subcellular location is the cytoplasm. The catalysed reaction is 3-deoxy-alpha-D-manno-oct-2-ulosonate + CTP = CMP-3-deoxy-beta-D-manno-octulosonate + diphosphate. The protein operates within nucleotide-sugar biosynthesis; CMP-3-deoxy-D-manno-octulosonate biosynthesis; CMP-3-deoxy-D-manno-octulosonate from 3-deoxy-D-manno-octulosonate and CTP: step 1/1. It functions in the pathway bacterial outer membrane biogenesis; lipopolysaccharide biosynthesis. Functionally, activates KDO (a required 8-carbon sugar) for incorporation into bacterial lipopolysaccharide in Gram-negative bacteria. This is 3-deoxy-manno-octulosonate cytidylyltransferase from Methylobacillus flagellatus (strain ATCC 51484 / DSM 6875 / VKM B-1610 / KT).